Consider the following 253-residue polypeptide: Phycoerythrobilin:ferredoxin oxidoreductase (253 aa).

Belongs to the HY2 family.

The catalysed reaction is (3Z)-phycoerythrobilin + oxidized 2[4Fe-4S]-[ferredoxin] = 15,16-dihydrobiliverdin + reduced 2[4Fe-4S]-[ferredoxin] + 2 H(+). Functionally, catalyzes the two-electron reduction of the C2 and C3(1) diene system of 15,16-dihydrobiliverdin. The protein is Phycoerythrobilin:ferredoxin oxidoreductase of Prochlorococcus marinus (strain MIT 9312).